Here is a 143-residue protein sequence, read N- to C-terminus: Nucleoside diphosphate kinase (143 aa).

The ATP site is built by Lys-11, Phe-59, Arg-87, Thr-93, Arg-104, and Asn-114. The active-site Pros-phosphohistidine intermediate is His-117.

The protein belongs to the NDK family. In terms of assembly, homotetramer. Mg(2+) serves as cofactor.

It is found in the cytoplasm. The enzyme catalyses a 2'-deoxyribonucleoside 5'-diphosphate + ATP = a 2'-deoxyribonucleoside 5'-triphosphate + ADP. It catalyses the reaction a ribonucleoside 5'-diphosphate + ATP = a ribonucleoside 5'-triphosphate + ADP. Its function is as follows. Major role in the synthesis of nucleoside triphosphates other than ATP. The ATP gamma phosphate is transferred to the NDP beta phosphate via a ping-pong mechanism, using a phosphorylated active-site intermediate. This chain is Nucleoside diphosphate kinase, found in Erwinia tasmaniensis (strain DSM 17950 / CFBP 7177 / CIP 109463 / NCPPB 4357 / Et1/99).